We begin with the raw amino-acid sequence, 598 residues long: MNELIKHKLELLPDSPGCYLHKDKEGTIIYVGKAKNLKKRVRSYFRGSHDTKTELLVSEIVDFEYIVTESDTEALLLEINLIQKNMPKYNIKLKDDKSYPFLKITNESFPRLVITRYIKKNDGLYFGPYPDSYTANEVKKLLDRIFPFKKCKNPINKVCFYYHLGQCCAHTICHTDKAYWDRLIDDVKHFLNGKDDKIIEDLRSKMLAASEEMAFERAAEYRDLISGIATMRTKQRVMSKDLQDRDIFGYYVDKGWMCVQVFFVRQGKLIQRDVNLFPYYNDAEEDFLTYMGQFYQDKQHFIPKEVFIPEAIDEELVAAIVPTKIIKPKRGEKKQLVALATKNARVSLQQKFDLLEKDIKKTSGAIENLGQLLRIDKPVRIEAFDNSNIQGTSPVAAMVVFVDGKPSKKDYRKFKIKTVVGPDDYASMREVLFRRYSRVKKEGLQAPNLIIVDGGVGQVNVAKDVIEKQLGLTIPVAGLQKNDKHQTHDLLFGNPLEVVPLPRRSEEFFLLHRIQDEVHRFAVTFHRQVRRKNSFSSTLDHISGLGPKRKQLLLRHFKTITAIASATSEEIQALGIPKTVVEAIQQQITDNKNDRSSP.

The 78-residue stretch at 14–91 folds into the GIY-YIG domain; the sequence is DSPGCYLHKD…IQKNMPKYNI (78 aa). The region spanning 196–231 is the UVR domain; it reads DKIIEDLRSKMLAASEEMAFERAAEYRDLISGIATM.

It belongs to the UvrC family. In terms of assembly, interacts with UvrB in an incision complex.

It is found in the cytoplasm. The UvrABC repair system catalyzes the recognition and processing of DNA lesions. UvrC both incises the 5' and 3' sides of the lesion. The N-terminal half is responsible for the 3' incision and the C-terminal half is responsible for the 5' incision. This chain is UvrABC system protein C, found in Streptococcus pyogenes serotype M12 (strain MGAS2096).